Consider the following 390-residue polypeptide: S-adenosylmethionine:tRNA ribosyltransferase-isomerase (390 aa).

The segment at 1–22 (MTQPLSQDQHDSSSNMPTDNAE) is disordered.

The protein belongs to the QueA family. Monomer.

It is found in the cytoplasm. It carries out the reaction 7-aminomethyl-7-carbaguanosine(34) in tRNA + S-adenosyl-L-methionine = epoxyqueuosine(34) in tRNA + adenine + L-methionine + 2 H(+). Its pathway is tRNA modification; tRNA-queuosine biosynthesis. In terms of biological role, transfers and isomerizes the ribose moiety from AdoMet to the 7-aminomethyl group of 7-deazaguanine (preQ1-tRNA) to give epoxyqueuosine (oQ-tRNA). The protein is S-adenosylmethionine:tRNA ribosyltransferase-isomerase of Psychrobacter sp. (strain PRwf-1).